A 52-amino-acid polypeptide reads, in one-letter code: Insulin-2 (52 aa).

3 disulfide bridges follow: Cys-7–Cys-38, Cys-19–Cys-51, and Cys-37–Cys-42.

Belongs to the insulin family. In terms of assembly, heterodimer of a B chain and an A chain linked by two disulfide bonds.

The protein localises to the secreted. Insulin decreases blood glucose concentration. It increases cell permeability to monosaccharides, amino acids and fatty acids. It accelerates glycolysis, the pentose phosphate cycle, and glycogen synthesis in liver. The protein is Insulin-2 of Huso dauricus (Kaluga sturgeon).